A 32-amino-acid chain; its full sequence is Photosystem II reaction center protein T (32 aa).

Residues 3–23 traverse the membrane as a helical segment; it reads TLVYTFLLIGTLAVLFAAVFF.

The protein belongs to the PsbT family. As to quaternary structure, PSII is composed of 1 copy each of membrane proteins PsbA, PsbB, PsbC, PsbD, PsbE, PsbF, PsbH, PsbI, PsbJ, PsbK, PsbL, PsbM, PsbT, PsbX, PsbY, PsbZ, Psb30/Ycf12, at least 3 peripheral proteins of the oxygen-evolving complex and a large number of cofactors. It forms dimeric complexes.

The protein localises to the plastid. It is found in the chloroplast thylakoid membrane. Its function is as follows. Found at the monomer-monomer interface of the photosystem II (PS II) dimer, plays a role in assembly and dimerization of PSII. PSII is a light-driven water plastoquinone oxidoreductase, using light energy to abstract electrons from H(2)O, generating a proton gradient subsequently used for ATP formation. The sequence is that of Photosystem II reaction center protein T from Guillardia theta (Cryptophyte).